Reading from the N-terminus, the 303-residue chain is Thioesterase poxG (303 aa).

This sequence belongs to the lcsJ thioesterase family.

The protein operates within secondary metabolite biosynthesis. Functionally, thioesterase; part of the gene cluster that mediates the biosynthesis of oxaleimides, cytotoxic compounds containing an unusual disubstituted succinimide moiety. The first step of the pathway is provided by the HR-PKS poxF that serves in a new mode of collaborative biosynthesis with the PKS-NRPS poxE, by providing the olefin containing amino acid substrate via the synthesis of an ACP-bound dec-4-enoate. The cytochrome P450 monooxygenase poxM-catalyzed oxidation at the alpha-position creates the enzyme-bound 2-hydroxydec-4-enoyl-ACP thioester, which may be prone to spontaneous hydrolysis to yield 2-hydroxydec-4-enoic acid due to increased electrophilicity of the carbonyl. 2-hydroxydec-4-enoic acid can then be further oxidized by poxM to yield the alpha-ketoacid 2-oxodec-4-enoicacid, which is reductively aminated by the aminotransferase poxL to yield (S,E)-2-aminodec-4-enoic acid. The Hybrid PKS-NRPS synthetase poxE then performs condensation between the octaketide product of its PKS modules and the amino group of (S,E)-2-aminodec-4-enoic acid which is activated and incorporated by the adenylation domain. The resulting aminoacyl product can be cyclized by the Diels-Alderase PoxQ and reductively released by the reductive (R) domain of poxE to yield an aldehyde intermediate. The released aldehyde is then substrate for a Knoevenagel condensation by the hydrolyase poxO followed by an oxidation at the 5-position of the pyrrolidone ring. The presence of the olefin from the amino acid building block allows for migration of the substituted allyl group to occur. This allylic transposition reaction takes place in a conjugate addition, semipinacol-like fashion to yield a succinimide intermediate. Iterative two-electron oxidations of the C7 methyl of the succinimide intermediate to the carboxylic acid can be catalyzed by one of two remaining cytochrome P450 monooxygenasess poxC or poxD to yield oxaleimide A. Subsequent oxidation yields the maleimide scaffold oxaleimide I. Both oxaleimide A and oxaleimide I can undergo oxidative modifications in the decalin ring to yield the series of products oxaleimides B to H. The chain is Thioesterase poxG from Penicillium oxalicum (strain 114-2 / CGMCC 5302) (Penicillium decumbens).